The chain runs to 503 residues: ESX-5 secretion system protein EccD5 (503 aa).

10 consecutive transmembrane segments (helical) span residues 137 to 157 (VVAV…ASGV), 169 to 189 (LTTI…MMLL), 200 to 220 (VADI…ASAP), 224 to 244 (VGSP…ALAL), 250 to 270 (RLAI…ASLS), 272 to 292 (MVAA…CVVM), 359 to 379 (FLSG…TSLC), 414 to 434 (ITLA…YALV), 443 to 463 (IVAS…AVVP), and 480 to 500 (YLCL…YAAI).

This sequence belongs to the EccD/Snm4 family. Part of the ESX-5 / type VII secretion system (T7SS), which is composed of cytosolic and membrane components. The ESX-5 membrane complex is composed of EccB5, EccC5, EccD5 and EccE5.

Its subcellular location is the cell inner membrane. Functionally, part of the ESX-5 specialized secretion system, which is responsible for the secretion of EsxN and a number of PE_PGRS and PPE proteins. This component is essential for ESX-5 complex stability and secretion. The chain is ESX-5 secretion system protein EccD5 from Mycobacterium marinum (strain ATCC BAA-535 / M).